The sequence spans 188 residues: Acyl-acyl carrier protein thioesterase ATL2, chloroplastic (188 aa).

Residues 1-47 (MFQATSTGAQIMHAAFPRSWRRGHVLPLRSAKIFKPLACLELRGSTG) constitute a chloroplast transit peptide. Residue aspartate 64 is part of the active site.

This sequence belongs to the 4-hydroxybenzoyl-CoA thioesterase family. As to expression, expressed in endodermal and peridermal cells in young and mature roots, in boundaries of stem lateral organs and developing seeds.

The protein localises to the plastid. It is found in the chloroplast. Functionally, acyl-ACP thioesterase involved in the production of fatty acids and beta-keto fatty acids. Can produce beta-keto fatty acids of medium chain (8:0 and 10:0) and small amounts of 8:0 fatty acid when expressed in a heterologous organism (E.coli). May play a role in suberin biosynthesis. In Arabidopsis thaliana (Mouse-ear cress), this protein is Acyl-acyl carrier protein thioesterase ATL2, chloroplastic.